We begin with the raw amino-acid sequence, 424 residues long: Protein CLP1 homolog (424 aa).

Residues E19, K60, and 122–127 contribute to the ATP site; that span reads DVGKST.

Belongs to the Clp1 family. Clp1 subfamily.

Its subcellular location is the nucleus. Functionally, required for endonucleolytic cleavage during polyadenylation-dependent pre-mRNA 3'-end formation. The sequence is that of Protein CLP1 homolog (cbc) from Aedes aegypti (Yellowfever mosquito).